The following is a 283-amino-acid chain: uncharacterized protein (283 aa).

Asn-15 is a glycosylation site (N-linked (GlcNAc...) asparagine). The PQ-loop 1 domain occupies 15 to 81 (NATASTVFAI…QELNIALKVQ (67 aa)). 6 helical membrane passes run 19–39 (STVFAILGTVCWCVQLIPQII), 48–68 (EGLDTLFILSWVVASIPLSVY), 108–128 (ALFVVISFMLFSGGLQAMLIL), 138–158 (VEWPVVFMGVLATVLVNIGFL), 170–190 (VTGISYLFLAIDSSGSLFSFL), and 206–226 (GLLFIIEMGVFVLAFIFNVLL). Residues 149–204 (ATVLVNIGFLPQYISIFRARAVTGISYLFLAIDSSGSLFSFLSLPFDRWDVLAAVD) form the PQ-loop 2 domain. N-linked (GlcNAc...) asparagine glycosylation occurs at Asn-228.

It localises to the membrane. This is an uncharacterized protein from Schizosaccharomyces pombe (strain 972 / ATCC 24843) (Fission yeast).